A 164-amino-acid polypeptide reads, in one-letter code: MASGSADHEDLRYRQCAGVMLANREGLVFAAQRIDSKNLGAWQMPQGGIDPGETQQEAAMRELEEETGVSADLADVIARMPYPVRYDLPEELQGKLWGGRYRGQEQHWFLARFTGTDADIDIAAHNPPEFSEWKWVEPDELPRLIVPFKREVYRAVVKEFRSLI.

The region spanning 12-158 is the Nudix hydrolase domain; it reads RYRQCAGVML…KREVYRAVVK (147 aa). The Nudix box signature appears at 47 to 68; sequence GGIDPGETQQEAAMRELEEETG.

Belongs to the Nudix hydrolase family. RppH subfamily. A divalent metal cation is required as a cofactor.

Functionally, accelerates the degradation of transcripts by removing pyrophosphate from the 5'-end of triphosphorylated RNA, leading to a more labile monophosphorylated state that can stimulate subsequent ribonuclease cleavage. This is RNA pyrophosphohydrolase from Erythrobacter litoralis (strain HTCC2594).